Consider the following 372-residue polypeptide: NADH-quinone oxidoreductase subunit H (372 aa).

A run of 8 helical transmembrane segments spans residues 34 to 54, 106 to 126, 139 to 159, 178 to 198, 217 to 237, 269 to 289, 313 to 333, and 352 to 372; these read LPLG…LYAL, FLFV…FAVL, VGLF…LAAG, IVSY…MAGT, FFLF…IASL, VIFL…AIVF, VWGA…QMWL, and VLTP…IYVP.

It belongs to the complex I subunit 1 family. NDH-1 is composed of 14 different subunits. Subunits NuoA, H, J, K, L, M, N constitute the membrane sector of the complex.

It is found in the cell inner membrane. It catalyses the reaction a quinone + NADH + 5 H(+)(in) = a quinol + NAD(+) + 4 H(+)(out). Functionally, NDH-1 shuttles electrons from NADH, via FMN and iron-sulfur (Fe-S) centers, to quinones in the respiratory chain. The immediate electron acceptor for the enzyme in this species is believed to be ubiquinone. Couples the redox reaction to proton translocation (for every two electrons transferred, four hydrogen ions are translocated across the cytoplasmic membrane), and thus conserves the redox energy in a proton gradient. This subunit may bind ubiquinone. The sequence is that of NADH-quinone oxidoreductase subunit H from Chlorobium luteolum (strain DSM 273 / BCRC 81028 / 2530) (Pelodictyon luteolum).